The primary structure comprises 503 residues: Arabinose import ATP-binding protein AraG 1 (503 aa).

2 consecutive ABC transporter domains span residues 5-240 (LRFD…MVGR) and 251-497 (RTLG…LPQT). 37-44 (GENGAGKS) is an ATP binding site.

This sequence belongs to the ABC transporter superfamily. Arabinose importer (TC 3.A.1.2.2) family. In terms of assembly, the complex is composed of two ATP-binding proteins (AraG), two transmembrane proteins (AraH) and a solute-binding protein (AraF).

The protein resides in the cell inner membrane. It carries out the reaction L-arabinose(out) + ATP + H2O = L-arabinose(in) + ADP + phosphate + H(+). Part of the ABC transporter complex AraFGH involved in arabinose import. Responsible for energy coupling to the transport system. In Burkholderia cenocepacia (strain HI2424), this protein is Arabinose import ATP-binding protein AraG 1.